Reading from the N-terminus, the 299-residue chain is Endonuclease 4 (299 aa).

The first 24 residues, 1 to 24, serve as a signal peptide directing secretion; sequence MSSSLRQWFARVLVLTQLINGALC. Residues tryptophan 25 and histidine 30 each coordinate a divalent metal cation. Position 25–30 (25–30) interacts with substrate; it reads WGKEGH. A disulfide bond links cysteine 34 and cysteine 65. Residues aspartate 69 and histidine 84 each contribute to the a divalent metal cation site. Residues 69–75, 84–87, and 94–99 each bind substrate; these read DEIKHHW, HYVD, and NYEYCR. Intrachain disulfides connect cysteine 93–cysteine 246, cysteine 101–cysteine 111, and cysteine 226–cysteine 233. The substrate site is built by asparagine 118 and tyrosine 136. Asparagine 118 is a glycosylation site (N-linked (GlcNAc...) asparagine). Residue asparagine 137 is glycosylated (N-linked (GlcNAc...) asparagine). 5 residues coordinate a divalent metal cation: histidine 147, aspartate 151, histidine 157, histidine 181, and aspartate 185. Residues 147 to 196 form a substrate binding region; it reads HFIGDIHQPLHVGFLGDEGGNTITVRWYRRKTNLHHVWDNMIIESALKTY. N-linked (GlcNAc...) asparagine glycosylation is found at asparagine 198, asparagine 211, and asparagine 229. The propeptide at 284–299 is removed in mature form; that stretch reads ATLNRIFSSKPKHAGS.

It belongs to the nuclease type I family. In terms of assembly, monomer. The cofactor is Mn(2+). Ca(2+) is required as a cofactor.

The enzyme catalyses Endonucleolytic cleavage to 5'-phosphomononucleotide and 5'-phosphooligonucleotide end-products.. Functionally, endonuclease that can use single-stranded RNA and DNA as substrates. In contradiction with PubMed:23620482, cannot hydrolyze single-stranded DNA and does not cleave mismatches. The chain is Endonuclease 4 from Arabidopsis thaliana (Mouse-ear cress).